Reading from the N-terminus, the 348-residue chain is Phosphoribosylformylglycinamidine cyclo-ligase (348 aa).

It belongs to the AIR synthase family.

It localises to the cytoplasm. The enzyme catalyses 2-formamido-N(1)-(5-O-phospho-beta-D-ribosyl)acetamidine + ATP = 5-amino-1-(5-phospho-beta-D-ribosyl)imidazole + ADP + phosphate + H(+). It functions in the pathway purine metabolism; IMP biosynthesis via de novo pathway; 5-amino-1-(5-phospho-D-ribosyl)imidazole from N(2)-formyl-N(1)-(5-phospho-D-ribosyl)glycinamide: step 2/2. This chain is Phosphoribosylformylglycinamidine cyclo-ligase, found in Geotalea uraniireducens (strain Rf4) (Geobacter uraniireducens).